The chain runs to 210 residues: Urease accessory protein UreF (210 aa).

Belongs to the UreF family. UreD, UreF and UreG form a complex that acts as a GTP-hydrolysis-dependent molecular chaperone, activating the urease apoprotein by helping to assemble the nickel containing metallocenter of UreC. The UreE protein probably delivers the nickel.

The protein resides in the cytoplasm. In terms of biological role, required for maturation of urease via the functional incorporation of the urease nickel metallocenter. The protein is Urease accessory protein UreF of Dinoroseobacter shibae (strain DSM 16493 / NCIMB 14021 / DFL 12).